A 202-amino-acid polypeptide reads, in one-letter code: Peptidyl-tRNA hydrolase (202 aa).

Position 14 (Tyr14) interacts with tRNA. His19 functions as the Proton acceptor in the catalytic mechanism. The tRNA site is built by Tyr64, Asn66, and Asn112.

Belongs to the PTH family. In terms of assembly, monomer.

Its subcellular location is the cytoplasm. The enzyme catalyses an N-acyl-L-alpha-aminoacyl-tRNA + H2O = an N-acyl-L-amino acid + a tRNA + H(+). Hydrolyzes ribosome-free peptidyl-tRNAs (with 1 or more amino acids incorporated), which drop off the ribosome during protein synthesis, or as a result of ribosome stalling. In terms of biological role, catalyzes the release of premature peptidyl moieties from peptidyl-tRNA molecules trapped in stalled 50S ribosomal subunits, and thus maintains levels of free tRNAs and 50S ribosomes. The sequence is that of Peptidyl-tRNA hydrolase from Xanthobacter autotrophicus (strain ATCC BAA-1158 / Py2).